The sequence spans 934 residues: Protocadherin gamma-C3 (934 aa).

The signal sequence occupies residues 1–31 (MVPEAWRSGLVSTGRVVGVLLLLGALNKAST). 6 Cadherin domains span residues 32 to 135 (VIHY…NPAF), 136 to 244 (PTQE…APVF), 245 to 352 (NQSL…APEI), 353 to 457 (TVTS…PPQS), 458 to 567 (SQSS…APQV), and 572 to 685 (PGGS…APRE). The Extracellular segment spans residues 32-693 (VIHYEIPEER…REQNKNLTFY (662 aa)). N-linked (GlcNAc...) asparagine glycosylation is found at Asn-245, Asn-424, Asn-478, Asn-550, Asn-615, and Asn-689. A helical transmembrane segment spans residues 694–714 (LLLSLILVSVGFVVTVFGVII). At 715–934 (FKVYKWKQSR…KKKSGKKEKK (220 aa)) the chain is on the cytoplasmic side. Disordered stretches follow at residues 804 to 843 (ESAP…WPNN) and 904 to 934 (ATLT…KEKK). Polar residues predominate over residues 812–843 (APPNTDWRFSQAQRPGTSGSQNGDDTGTWPNN). Residues 924–934 (NKKKSGKKEKK) show a composition bias toward basic residues.

The protein resides in the cell membrane. Potential calcium-dependent cell-adhesion protein. May be involved in the establishment and maintenance of specific neuronal connections in the brain. This is Protocadherin gamma-C3 (PCDHGC3) from Pan troglodytes (Chimpanzee).